Reading from the N-terminus, the 163-residue chain is tRNA-acetylating toxin 2 (163 aa).

Acetyl-CoA is bound by residues Leu89, Val91, His96, Gly97, Gln98, Gly99, Ala101, Arg102, and Glu132. Residue Tyr137 is part of the active site. Acetyl-CoA is bound at residue Arg139.

It belongs to the acetyltransferase family. GNAT subfamily. As to quaternary structure, homodimer (in absence of antitoxin). Forms a complex with cognate antitoxin TacA2. Forms a 4:2 antitoxin:toxin complex with cognate antitoxin TacA2.

The enzyme catalyses glycyl-tRNA(Gly) + acetyl-CoA = N-acetylglycyl-tRNA(Gly) + CoA + H(+). Toxic component of a type II toxin-antitoxin (TA) system. Acetylates tRNA and inhibits translation. Acetylates exclusively Gly in situ. Overexpression during the lag phase of a tacA2-tacT2 deletion strain leads to very small increase in persister cells in the presence of cefotaxime but no detectable growth phenotype in absence of antibiotics. Compared to a protein with a single amino acid change (TacT2 from S.enterica NCTC 13349, Glu-29 is Lys in NCTC 13349) this protein binds tRNA very poorly and acetylates tRNA very poorly. Persister cell formation is neutralized by cognate antitoxin TacA2. Neutralized only by cognate antitoxin TacA2 (A8), but not by TacA1 or TacA3. Plays a role in persister cell formation. In terms of biological role, the TacA2-TacT2 complex both represses and derepresses expression of its own operon. This is tRNA-acetylating toxin 2 from Salmonella typhimurium (strain 14028s / SGSC 2262).